The primary structure comprises 379 residues: Tryptophan 2,3-dioxygenase (379 aa).

Residues 57–61 (FIITH) and arginine 128 contribute to the substrate site. Histidine 312 provides a ligand contact to heme. Threonine 327 serves as a coordination point for substrate.

The protein belongs to the tryptophan 2,3-dioxygenase family. Homotetramer. Dimer of dimers. Heme serves as cofactor.

The enzyme catalyses L-tryptophan + O2 = N-formyl-L-kynurenine. Its pathway is amino-acid degradation; L-tryptophan degradation via kynurenine pathway; L-kynurenine from L-tryptophan: step 1/2. It functions in the pathway pigment biosynthesis; ommochrome biosynthesis. Functionally, heme-dependent dioxygenase that catalyzes the oxidative cleavage of the L-tryptophan (L-Trp) pyrrole ring and converts L-tryptophan to N-formyl-L-kynurenine. Catalyzes the oxidative cleavage of the indole moiety. This is Tryptophan 2,3-dioxygenase from Drosophila yakuba (Fruit fly).